The sequence spans 591 residues: N-acetylgalactosaminyltransferase 7 (591 aa).

The Cytoplasmic segment spans residues 1 to 11 (MRVSTIRSGRI). The helical; Signal-anchor for type II membrane protein transmembrane segment at 12 to 29 (CRLALCLLVLLPLLYLLA) threads the bilayer. Asn30 carries an N-linked (GlcNAc...) asparagine glycan. Over 30 to 591 (NWSDHHKRVQ…WWFKEIRPRW (562 aa)) the chain is Lumenal. A disordered region spans residues 68–100 (DGLGNFEPKDVKPRSGPGENGEAHSLSPDKKHM). Disulfide bonds link Cys132–Cys367, Cys358–Cys441, Cys479–Cys496, Cys519–Cys532, and Cys558–Cys573. Residues 141–251 (LPRTSVIIVF…TNWLPPLLAP (111 aa)) are catalytic subdomain A. Asp182 and Arg212 together coordinate substrate. Mn(2+) contacts are provided by Asp235 and His237. Positions 313 to 375 (PYRSPTHAGG…PCSRVGHVYR (63 aa)) are catalytic subdomain B. A substrate-binding site is contributed by Trp344. His372 is a binding site for Mn(2+). Substrate contacts are provided by Arg375 and Tyr380. Residues 466-585 (LHWGELRSVA…NDSYQQWWFK (120 aa)) form the Ricin B-type lectin domain. Asn576 carries N-linked (GlcNAc...) asparagine glycosylation.

It belongs to the glycosyltransferase 2 family. GalNAc-T subfamily. Mn(2+) serves as cofactor. As to expression, expressed in developing oocytes and egg chambers. During embryonic stages 9-11, expressed in the primordium of the foregut, midgut and hindgut. Expressed in the salivary glands from embryonic stage 12 onwards. During embryonic stages 12-13, expressed in the posterior midgut and hindgut. During embryonic stages 14-15, expression continues in the hindgut. During embryonic stages 16-17, expressed in the antennomaxillary complex. In third instar larvae, ubiquitously expressed in wing, with increased expression in the notum and ventral wing pouch, eye-antennal, leg and haltere imaginal disks.

Its subcellular location is the golgi apparatus membrane. It catalyses the reaction L-seryl-[protein] + UDP-N-acetyl-alpha-D-galactosamine = a 3-O-[N-acetyl-alpha-D-galactosaminyl]-L-seryl-[protein] + UDP + H(+). The catalysed reaction is L-threonyl-[protein] + UDP-N-acetyl-alpha-D-galactosamine = a 3-O-[N-acetyl-alpha-D-galactosaminyl]-L-threonyl-[protein] + UDP + H(+). Its pathway is protein modification; protein glycosylation. Functionally, glycopeptide transferase involved in O-linked oligosaccharide biosynthesis, which catalyzes the transfer of an N-acetyl-D-galactosamine residue to an already glycosylated peptide. In contrast to other proteins of the family, it does not act as a peptide transferase that transfers GalNAc onto serine or threonine residue on the protein receptor, but instead requires the prior addition of a GalNAc on a peptide before adding additional GalNAc moieties. Some peptide transferase activity is however not excluded, considering that its appropriate peptide substrate may remain unidentified. Prefers the monoglycosylated Muc5AC-3 as substrate. Might have a role in protein O-glycosylation in the Golgi and thereby in establishing and/or maintaining a proper secretory apparatus structure. This is N-acetylgalactosaminyltransferase 7 from Drosophila melanogaster (Fruit fly).